A 413-amino-acid chain; its full sequence is Sprouty-related, EVH1 domain-containing protein 2 (413 aa).

The region spanning 5-122 (THPNDDSYIV…RGVRKALEDL (118 aa)) is the WH1 domain. Residues 122 to 163 (LTEGSTTSSSTLQNEAELGDDDVFTTATDSSSNSSQKKDHST) are disordered. The KBD domain occupies 195–248 (FSRNLFPFEDEEIVRINPRERWMITGYEDYRYAAVPDKFIQPEDSDSYVQISKN). Residues 303 to 411 (RCVYCRDMFN…CGCCGGKHKA (109 aa)) form the SPR domain.

It localises to the cell membrane. The protein resides in the cytoplasmic vesicle. The protein localises to the secretory vesicle membrane. Its subcellular location is the cytoplasm. Its function is as follows. Negatively regulates Ras signaling pathways and downstream activation of MAP kinases. The chain is Sprouty-related, EVH1 domain-containing protein 2 (spred2) from Danio rerio (Zebrafish).